The sequence spans 133 residues: Magnetosome protein MamC (133 aa).

Topologically, residues 1–5 (MAAFN) are cytoplasmic. A helical membrane pass occupies residues 6–26 (LALYLSKSIPGVGVLGGVIGG). Residues 27–67 (SAALAKNLKAKQRGEITTEEAVIDTGKEALGAGLATTVSAY) are Lumenal-facing. A magnetite interacting component (MIC) binds magnetite region spans residues 37-57 (KQRGEITTEEAVIDTGKEALG). Residues 68–88 (AAGVVGGGLVVSLGTAFAVAV) form a helical membrane-spanning segment. Residues 89-133 (AGKYAWDYGMEQMEAKLQEKKHQEQGGQTYGDNPDPFDPQELETP) are Cytoplasmic-facing. The disordered stretch occupies residues 105–133 (LQEKKHQEQGGQTYGDNPDPFDPQELETP).

Belongs to the magnetosome MamC family. In terms of assembly, probably interacts with MamA.

It is found in the magnetosome membrane. In terms of biological role, probably helps control the size of magnetite crystals; in vitro synthesis of magnetite yields larger and more well-developed magnetite crystals in the presence of purified MamC. Binds Fe(3+). The lumenal domain probably binds magnetite crystals, affecting crystal size and shape. Purified MamC self-assembles into micelles in the presence of ferric chloride hexahydrate (FeCl(3).6H(2)O); both oxygen and iron are present in the proteinaceous micelles. Whether this is relevant in vivo is unknown. This Magnetococcus marinus (strain ATCC BAA-1437 / JCM 17883 / MC-1) protein is Magnetosome protein MamC.